A 501-amino-acid polypeptide reads, in one-letter code: Acetyl-coenzyme A carboxylase carboxyl transferase subunit beta, chloroplastic (501 aa).

Residues 231–501 enclose the CoA carboxyltransferase N-terminal domain; the sequence is LWIECENCYG…LIQNEKESRS (271 aa). 4 residues coordinate Zn(2+): Cys-235, Cys-238, Cys-254, and Cys-257. The C4-type zinc-finger motif lies at 235–257; it reads CENCYGLNYKKILKSKMNICEHC.

It belongs to the AccD/PCCB family. In terms of assembly, acetyl-CoA carboxylase is a heterohexamer composed of biotin carboxyl carrier protein, biotin carboxylase and 2 subunits each of ACCase subunit alpha and ACCase plastid-coded subunit beta (accD). Zn(2+) serves as cofactor.

The protein localises to the plastid. The protein resides in the chloroplast stroma. It carries out the reaction N(6)-carboxybiotinyl-L-lysyl-[protein] + acetyl-CoA = N(6)-biotinyl-L-lysyl-[protein] + malonyl-CoA. Its pathway is lipid metabolism; malonyl-CoA biosynthesis; malonyl-CoA from acetyl-CoA: step 1/1. In terms of biological role, component of the acetyl coenzyme A carboxylase (ACC) complex. Biotin carboxylase (BC) catalyzes the carboxylation of biotin on its carrier protein (BCCP) and then the CO(2) group is transferred by the transcarboxylase to acetyl-CoA to form malonyl-CoA. In Lotus japonicus (Lotus corniculatus var. japonicus), this protein is Acetyl-coenzyme A carboxylase carboxyl transferase subunit beta, chloroplastic.